The primary structure comprises 452 residues: MDFLRIVENPAAAMPLNVSFTNRNYDLDYDSVQPYFYCDEEENFYQQQQQSELQPPAPSEDIWKKFELLPTPPLSPSRRSGLCSPSYVAVASFSPRGDDDGGGGSFSTADQLEMVTELLGGDMVNQSFICDPDDETFIKNIIIQDCMWSGFSAAAKLVSEKLASYQAARKDSGSPIPARGHGGYSTSSLYLQDLSAAASECIDPSVVFPYPLNDSSSPKPCASPDSTAFSPSSDSLLSSAESSPRGSPEPLALHEETPPTTSSDSEEEQEDEEEIDVVSVEKRQPPAKRSESGSPSAGGHSKPPHSPLVLKRCHVSTHQHNYAAPPSTRKDYPSAKRAKLDSGRVLKQISNNRKCASPRSSDTEENDKRRTHNVLERQRRNELKRSFFARRDQIPELENNEKAPKVVILKKATAYILSVQAEEQKLVSEKDVLRKRREQLKLKLEQLRNSCP.

A Phosphoserine modification is found at serine 19. Threonine 21 carries the post-translational modification Phosphothreonine. Lysine 65 is covalently cross-linked (Glycyl lysine isopeptide (Lys-Gly) (interchain with G-Cter in SUMO2)). A Phosphothreonine; by GSK3; alternate modification is found at threonine 71. Residue threonine 71 is glycosylated (O-linked (GlcNAc) threonine; alternate). Serine 75 carries the post-translational modification Phosphoserine; by DYRK2, GSK3 and CDK2. Phosphoserine occurs at positions 84 and 94. The 9aaTAD motif lies at 113 to 121 (EMVTELLGG). The residue at position 156 (lysine 156) is an N6-acetyllysine; by PCAF; alternate. Residues lysine 156 and lysine 161 each participate in a glycyl lysine isopeptide (Lys-Gly) (interchain with G-Cter in SUMO2); alternate cross-link. N6-acetyllysine; alternate is present on lysine 161. Serine 164 bears the Phosphoserine mark. Lysine 170 bears the N6-acetyllysine; by PCAF mark. Phosphoserine occurs at positions 172 and 174. The interval 214-377 (DSSSPKPCAS…KRRTHNVLER (164 aa)) is disordered. The span at 223–250 (SPDSTAFSPSSDSLLSSAESSPRGSPEP) shows a compositional bias: low complexity. Positions 264–276 (DSEEEQEDEEEID) are enriched in acidic residues. Residues 279–291 (SVEKRQPPAKRSE) are compositionally biased toward basic and acidic residues. Lysine 288 carries the post-translational modification N6-acetyllysine; by PCAF. Serine 306 bears the Phosphoserine mark. Lysine 311 is covalently cross-linked (Glycyl lysine isopeptide (Lys-Gly) (interchain with G-Cter in SUMO2)). Phosphoserine is present on serine 327. Threonine 328 is subject to Phosphothreonine. Positions 328–344 (TRKDYPSAKRAKLDSGR) are enriched in basic and acidic residues. Lysine 330 and lysine 336 each carry N6-acetyllysine; by PCAF. Serine 342, serine 357, serine 360, and serine 361 each carry phosphoserine. Residues 348–360 (QISNNRKCASPRS) show a composition bias toward polar residues. Residues 367-419 (DKRRTHNVLERQRRNELKRSFFARRDQIPELENNEKAPKVVILKKATAYILSV) enclose the bHLH domain. Residues 368 to 377 (KRRTHNVLER) carry the UBR5-degron motif. N6-acetyllysine; by PCAF is present on lysine 384. A leucine-zipper region spans residues 426-447 (LVSEKDVLRKRREQLKLKLEQL).

In terms of assembly, efficient DNA binding requires dimerization with another bHLH protein. Binds DNA as a heterodimer with MAX. Interacts with TAF1C and SPAG9. Interacts with PARP10. Interacts with KDM5A and KDM5B. Interacts (when phosphorylated at Thr-71 and Ser-75) with FBXW7. Interacts with PIM2. Interacts with RIOX1. The heterodimer MYC:MAX interacts with ABI1; the interaction may enhance MYC:MAX transcriptional activity. Interacts with TRIM6. Interacts with NPM1; the binary complex is recruited to the promoter of MYC target genes and enhances their transcription. Interacts with CIP2A; leading to the stabilization of MYC. Interacts with NUP205. Interacts with HEATR1; the interaction is required for localization of MYC to the nucleolus. Post-translationally, phosphorylated by PRKDC. Phosphorylation at Ser-342 by PIM2 leads to the stabilization of MYC. Phosphorylation at Ser-75 by CDK2 prevents Ras-induced senescence. Phosphorylated at Ser-75 by DYRK2; this primes the protein for subsequent phosphorylation by GSK3B at Thr-71. Phosphorylation at Thr-71 and Ser-75 by GSK3 is required for ubiquitination and degradation by the proteasome. Dephosphorylation at multiple sites by the PNUTS-PP1 complex promotes MYC stability by preventing ubiquitination by the SCF(FBXW7) complex. Dephosphorylation at Ser-75 by protein phosphatase 2A (PPP2CA) promotes its degradation; interaction with PPP2CA is enhanced by AMBRA1. Ubiquitinated by the SCF(FBXW7) complex when phosphorylated at Thr-71 and Ser-75, leading to its degradation by the proteasome. Ubiquitination is counteracted by USP28 in the nucleoplasm and USP36 in the nucleolus, both interacting with of FBXW7, leading to its deubiquitination and preventing degradation. Also polyubiquitinated by the DCX(TRPC4AP) complex. Ubiquitinated by UBR5 when not forming a heterodimer with another bHLH protein, leading to its degradation: UBR5 recognizes and binds a degron that is only available upon heterodimer dissociation. Ubiquitinated by TRIM6 in a phosphorylation-independent manner.

It is found in the nucleus. The protein localises to the nucleoplasm. Its subcellular location is the nucleolus. The protein resides in the cytoplasm. It localises to the chromosome. Transcription factor that binds DNA in a non-specific manner, yet also specifically recognizes the core sequence 5'-CAC[GA]TG-3'. Activates the transcription of growth-related genes. Binds to the VEGFA promoter, promoting VEGFA production and subsequent sprouting angiogenesis. Regulator of somatic reprogramming, controls self-renewal of embryonic stem cells. Functions with TAF6L to activate target gene expression through RNA polymerase II pause release. Positively regulates transcription of HNRNPA1, HNRNPA2 and PTBP1 which in turn regulate splicing of pyruvate kinase PKM by binding repressively to sequences flanking PKM exon 9, inhibiting exon 9 inclusion and resulting in exon 10 inclusion and production of the PKM M2 isoform. This Sus scrofa (Pig) protein is Myc proto-oncogene protein (MYC).